Here is a 566-residue protein sequence, read N- to C-terminus: Phenylalanine--tRNA ligase beta subunit (566 aa).

The 76-residue stretch at 287-362 folds into the B5 domain; that stretch reads YFQEEVEFNV…IGEGLSSFNP (76 aa). Mg(2+) is bound by residues D340, D346, E349, and D350.

This sequence belongs to the phenylalanyl-tRNA synthetase beta subunit family. Type 2 subfamily. As to quaternary structure, tetramer of two alpha and two beta subunits. Mg(2+) serves as cofactor.

Its subcellular location is the cytoplasm. The catalysed reaction is tRNA(Phe) + L-phenylalanine + ATP = L-phenylalanyl-tRNA(Phe) + AMP + diphosphate + H(+). The protein is Phenylalanine--tRNA ligase beta subunit of Borreliella burgdorferi (strain ZS7) (Borrelia burgdorferi).